The primary structure comprises 110 residues: Mitochondrial pyruvate carrier 1 (110 aa).

2 helical membrane passes run H20–V36 and M44–M61.

This sequence belongs to the mitochondrial pyruvate carrier (MPC) (TC 2.A.105) family.

The protein resides in the mitochondrion inner membrane. In terms of biological role, mediates the uptake of pyruvate into mitochondria. This is Mitochondrial pyruvate carrier 1 from Arabidopsis thaliana (Mouse-ear cress).